We begin with the raw amino-acid sequence, 526 residues long: Methyltetrahydroprotoberberine 14-monooxygenase (526 aa).

A helical membrane pass occupies residues 14–34; it reads LLLQYLQPISVALVVIALVWN. Residue Cys468 coordinates heme.

The protein belongs to the cytochrome P450 family. Heme serves as cofactor. In terms of tissue distribution, mainly expressed in roots, and barely in stems, leaves and carpels.

It is found in the membrane. It catalyses the reaction (S)-cis-N-methylcanadine + reduced [NADPH--hemoprotein reductase] + O2 = allocryptopine + oxidized [NADPH--hemoprotein reductase] + H2O + 2 H(+). It carries out the reaction (S)-cis-N-methylstylopine + reduced [NADPH--hemoprotein reductase] + O2 = protopine + oxidized [NADPH--hemoprotein reductase] + H2O + 2 H(+). The catalysed reaction is (S)-cis-N-methyltetrahydrothalifendine + reduced [NADPH--hemoprotein reductase] + O2 = 7-hydroxy-8-methoxy-11-methyl-17,19-dioxa-11-azatetracyclo[12.7.0.0(4,9).0(16,20)]henicosa-1(21),4(9),5,7,14,16(20)-hexaen-2-one + oxidized [NADPH--hemoprotein reductase] + H2O + 2 H(+). The enzyme catalyses (S)-cis-N-methyltetrahydropalmatine + reduced [NADPH--hemoprotein reductase] + O2 = muramine + oxidized [NADPH--hemoprotein reductase] + H2O + 2 H(+). The protein operates within alkaloid biosynthesis. With respect to regulation, repressed by cytochrome P450 inhibitors ketoconazole, metyrapone, prochloraz, ancymidol and cytochrome C. In terms of biological role, involved in the biosynthesis of the isoquinoline alkaloid sanguinarine. Catalyzes the conversion of N-methylated protoberberine alkaloids N-methylstylopine and N-methylcanadine into protopine and allocryptopine, respectively. Can also use (S)-cis-N-methyltetrahydrothalifendine and (S)-cis-N-methyltetrahydropalmatine as substrates. The protein is Methyltetrahydroprotoberberine 14-monooxygenase of Papaver somniferum (Opium poppy).